Consider the following 151-residue polypeptide: Sperm surface protein Sp17 (151 aa).

2 disordered regions span residues 56 to 115 (DPAE…EKEE) and 127 to 151 (GHIA…EENK). Over residues 62–98 (SKVEDRFYNNHAFEEQEPPEKSDPKQEESQISGKEEE) the composition is skewed to basic and acidic residues. The 30-residue stretch at 114–143 (EEVAAVKIQAAFRGHIAREEAKKMKTNSLQ) folds into the IQ domain.

As to quaternary structure, homodimer. May interact with ROPN1. As to expression, testis and sperm specific.

It localises to the membrane. Its function is as follows. Sperm surface zona pellucida binding protein. Helps to bind spermatozoa to the zona pellucida with high affinity. Might function in binding zona pellucida and carbohydrates. This chain is Sperm surface protein Sp17 (SPA17), found in Homo sapiens (Human).